The sequence spans 326 residues: GTPase IMAP family member 5 (326 aa).

At 1–297 the chain is on the cytoplasmic side; the sequence is MEDHGFEELS…MLCRVTSCLD (297 aa). Residues 42 to 245 form the AIG1-type G domain; that stretch reads SGLLRILLVG…HSNDLFVYTQ (204 aa). GTP contacts are provided by residues 51–59, Ser-72, 169–171, and Asn-206; these read GKSGCGKSA and HKE. Residues 298-318 traverse the membrane as a helical; Anchor for type IV membrane protein segment; the sequence is WHIAVSVLLIVLGLTLLITLI. Over 319–326 the chain is Lumenal; sequence NMYIGRWK.

Belongs to the TRAFAC class TrmE-Era-EngA-EngB-Septin-like GTPase superfamily. AIG1/Toc34/Toc159-like paraseptin GTPase family. IAN subfamily. Interacts with BAD, BAK1, BAX, BCL2, BCL2L1/Bcl-xL and BCL2L11/BimEL. The interaction with BAX is increased, when cells initiate apoptosis upon IL2 withdrawal. Forms a complex with BCL2L1 or MCL1 and HSPA8/HSC70; the interaction between HSPA8 and BCL2L1 or MCL1 is impaired in the absence of GIMAP5. May interact (via N-terminus) with microtubules. Primarily expressed in spleen, heart, lung and intestine and, at lower levels, in kidney, stomach and muscle. Expressed in thymus and lymph nodes (at protein level). In the spleen, expressed in periarteriolar lymphatic sheets. Isoform 2: Expressed at higher levels in T lymphocytes compared to isoform 1.

It localises to the lysosome membrane. The protein resides in the endosome. Its subcellular location is the multivesicular body membrane. The protein localises to the endosome membrane. Required for mitochondrial integrity and T-cell survival. May contribute to T-cell quiescence. In terms of biological role, plays a role in T lymphocyte development and the optimal generation of CD4/CD8 double-positive thymocytes. Inhibitor of GSK3A, possibly by sequestering GSK3A in cytoplasmic vesicles and impairing its translocation to the nucleus. Consequently, impairs GSK3A-dependent transcriptional program and regulation of the DNA damage response occurring during T cells proliferation. Required for the survival of peripheral T cells, natural killer (NK) and NK T-cell development and the maintenance of normal liver function. Promotes the survival of quiescent T-cells. May regulate Ca(2+) homeostasis by modulating lysosomal Ca(2+) stores, preventing its accumulation in the absence of T cell activation. May play a role in mitochondrial DNA segregation in hematopoietic tissues. Is a regulator of liver endothelial cell homeostasis. This Rattus norvegicus (Rat) protein is GTPase IMAP family member 5 (Gimap5).